The sequence spans 165 residues: uncharacterized protein (165 aa).

The region spanning 28-139 (QNALKDTGLA…KPNEREEAVK (112 aa)) is the Cupin type-1 domain.

This is an uncharacterized protein from Bacillus subtilis (strain 168).